The sequence spans 298 residues: L-xylulose reductase (298 aa).

Positions 19, 68, and 103 each coordinate NADP(+). Residues Ser161, Ser162, and Tyr175 each act as proton donor in the active site. NADP(+)-binding residues include Tyr175, Lys179, and Val207. Residue Lys179 is the Lowers pKa of active site Tyr of the active site.

This sequence belongs to the short-chain dehydrogenases/reductases (SDR) family.

It carries out the reaction xylitol + NADP(+) = L-xylulose + NADPH + H(+). The protein operates within carbohydrate degradation; L-arabinose degradation via L-arabinitol; D-xylulose 5-phosphate from L-arabinose (fungal route): step 3/5. In terms of biological role, L-xylulose reductase involved in the catabolism of L-arabinose through an oxidoreductive pathway. Catalyzes the NADPH-dependent reduction of L-xylulose. The sequence is that of L-xylulose reductase from Aspergillus niger (strain ATCC 1015 / CBS 113.46 / FGSC A1144 / LSHB Ac4 / NCTC 3858a / NRRL 328 / USDA 3528.7).